The chain runs to 259 residues: Leucine-rich repeat-containing protein 3B (259 aa).

An N-terminal signal peptide occupies residues 1-33 (MNLVDLWLSRSLSMCLLLQSFVLMILCFHSASM). The LRRNT domain occupies 34–64 (CPKGCLCSSSGGLNVTCSNANLKEIPRDLPP). Asn47 is a glycosylation site (N-linked (GlcNAc...) asparagine). LRR repeat units lie at residues 65 to 86 (ETVLLYLDSNQITSIPNEIFKD), 89 to 110 (QLRVLNLSKNGIEFIDEHAFKG), and 114 to 135 (TLQTLDLSDNRIQSVHKNAFNN). Asn94 carries an N-linked (GlcNAc...) asparagine glycan. The 53-residue stretch at 145 to 197 (NPWHCDCTLQQVLRSMASNHETAHNVICKTSVLDEHAGRPFLNAANDADLCNL) folds into the LRRCT domain. A helical membrane pass occupies residues 205–225 (AMLVTMFGWFTMVISYVVYYV).

It belongs to the LRRC3 family.

The protein localises to the membrane. The sequence is that of Leucine-rich repeat-containing protein 3B (Lrrc3b) from Mus musculus (Mouse).